Reading from the N-terminus, the 1165-residue chain is MRFIIGGAGSGKSQRCLDELTQAAQAAPAGPPLILLVPEQATFQVEQALLGSGRLKGIIRAQVLSFQRLAWRVSLKAGGLALPPLSDLGKQMVLRALLEKKRDDLRLFHQVADKPGFIERVAGSIRELRSYRQGPESLRRQLSQLEAEGLGETSLGAKLHDLALVMDELRSYIEGRFTDPDEYLTVLAARLEESRLLEGAEVWVDGFNGFTPQELAVLGAVMRSARQVHISLCIPPGQLYKAGGHHSPSDLFHPVLSTYDQLMQLAAESGVAVDPPLYLNEPLRFRGAPELAHVERYLFRQSAPAWPGAPERIALVEAQNRREEVAAAAREILRLVREEGLRFREIAVVARDLEGYGDLAATLFAEHGIPAFIDRRRTVAHHPLVELLRAALEVVVQDWAYGPVFRYLKTDLTGVSRAEIDLLENYVIEHGIRGRAWQQQEPWQYLRRYTLEEDAVPAGPAQQALLDEIHRIRRRATAPLLAFQRRLQRRGRPGPTVREITTYLFQLLDDLKVARQLEAWKAEAEQRGDLETAREHEQVWTRVLELFDQIVEGLGDQVLSPKVYLQVLSAGLDGLKLGLIPPGLDQVIVGTVERSRHAGVRATLILGATEKDFPPQPAEDAIFTDRERERLKQSGLDVGPTSLERLFQEQFLTYVALTRGSDFLWISYPLADESGRAAAPSPVVGRMRRLFPELKPRPAAPPAPDAEAAVAQVATPRQLAAAVARALRRARSGYAVEPHWLDLYQCIVLDPDLHREGAAVLAAVGYEEWLRRRGTPVGRELARLLYGDRLVTSVSRLEAFLSCPFRHFAGYALRLQGRAEFTVSAPEFGLFYHAALSLFVRELERDGLAWDTLTPDEAWRRMDSIIDRLAPRLQSEILLSSPQHRYLLRVIRRTLQSSLDYLSEHVLHGEFRPVAVEVPFGEEMDGLPPVEVDLPGGGRVLLRGRIDRVDALEGRDGRWYVRVIDYKSGRRDLRLGDFYHGLTLQLLLYLMAVVEGGEPLLPGTRVPAGALYLPVYDPVEPVNAPVPPDEVRPLRRKRYQARGLVSDDPAVIQAMDAAGLGLIQAKLKKDGTVYKGAPVASPDQFRQLFAHLRRVVRACGEQILQGEAAIAPYRLGPHTACQYCAYRPVCQFDPAVEPQGYRRLEKMDAPDVWQRVAAAGGEGDV.

A UvrD-like helicase ATP-binding domain is found at 1 to 324; sequence MRFIIGGAGS…LVEAQNRREE (324 aa). 6–13 provides a ligand contact to ATP; it reads GGAGSGKS. In terms of domain architecture, UvrD-like helicase C-terminal spans 282–597; the sequence is PLRFRGAPEL…IVGTVERSRH (316 aa). 4 residues coordinate [4Fe-4S] cluster: Cys803, Cys1121, Cys1124, and Cys1130.

Belongs to the helicase family. AddB/RexB type 1 subfamily. In terms of assembly, heterodimer of AddA and AddB. Requires Mg(2+) as cofactor. [4Fe-4S] cluster is required as a cofactor.

The heterodimer acts as both an ATP-dependent DNA helicase and an ATP-dependent, dual-direction single-stranded exonuclease. Recognizes the chi site generating a DNA molecule suitable for the initiation of homologous recombination. The AddB subunit has 5' -&gt; 3' nuclease activity but not helicase activity. This chain is ATP-dependent helicase/deoxyribonuclease subunit B, found in Symbiobacterium thermophilum (strain DSM 24528 / JCM 14929 / IAM 14863 / T).